A 172-amino-acid chain; its full sequence is NADH-quinone oxidoreductase subunit B (172 aa).

Positions 52, 53, 117, and 147 each coordinate [4Fe-4S] cluster.

It belongs to the complex I 20 kDa subunit family. As to quaternary structure, NDH-1 is composed of 14 different subunits. Subunits NuoB, C, D, E, F, and G constitute the peripheral sector of the complex. [4Fe-4S] cluster serves as cofactor.

It is found in the cell inner membrane. The catalysed reaction is a quinone + NADH + 5 H(+)(in) = a quinol + NAD(+) + 4 H(+)(out). Its function is as follows. NDH-1 shuttles electrons from NADH, via FMN and iron-sulfur (Fe-S) centers, to quinones in the respiratory chain. Couples the redox reaction to proton translocation (for every two electrons transferred, four hydrogen ions are translocated across the cytoplasmic membrane), and thus conserves the redox energy in a proton gradient. This is NADH-quinone oxidoreductase subunit B from Ehrlichia ruminantium (strain Gardel).